Consider the following 179-residue polypeptide: ATP-dependent protease subunit HslV (179 aa).

Residue threonine 7 is part of the active site. Positions 162, 165, and 168 each coordinate Na(+).

Belongs to the peptidase T1B family. HslV subfamily. In terms of assembly, a double ring-shaped homohexamer of HslV is capped on each side by a ring-shaped HslU homohexamer. The assembly of the HslU/HslV complex is dependent on binding of ATP.

Its subcellular location is the cytoplasm. The enzyme catalyses ATP-dependent cleavage of peptide bonds with broad specificity.. Its activity is regulated as follows. Allosterically activated by HslU binding. Functionally, protease subunit of a proteasome-like degradation complex believed to be a general protein degrading machinery. The protein is ATP-dependent protease subunit HslV of Saccharophagus degradans (strain 2-40 / ATCC 43961 / DSM 17024).